The sequence spans 78 residues: MSEIASRVKAIIVDKLGVEESEVTNEASFTNDLGADSLDTVELIMEFEKEFGISIPDDQAEKIGTVGDAVSYIEEHAK.

The Carrier domain occupies 2 to 77 (SEIASRVKAI…DAVSYIEEHA (76 aa)). Ser37 is subject to O-(pantetheine 4'-phosphoryl)serine.

Belongs to the acyl carrier protein (ACP) family. 4'-phosphopantetheine is transferred from CoA to a specific serine of apo-ACP by AcpS. This modification is essential for activity because fatty acids are bound in thioester linkage to the sulfhydryl of the prosthetic group.

It localises to the cytoplasm. It participates in lipid metabolism; fatty acid biosynthesis. Functionally, carrier of the growing fatty acid chain in fatty acid biosynthesis. In Bacteroides thetaiotaomicron (strain ATCC 29148 / DSM 2079 / JCM 5827 / CCUG 10774 / NCTC 10582 / VPI-5482 / E50), this protein is Acyl carrier protein.